The chain runs to 297 residues: Adrenocorticotropic hormone receptor (297 aa).

Topologically, residues 1–23 (MKHIIHASGNVNGTARNNSDCPH) are extracellular. Residues N12 and N17 are each glycosylated (N-linked (GlcNAc...) asparagine). 2 cysteine pairs are disulfide-bonded: C21/C253 and C245/C251. A helical membrane pass occupies residues 24–49 (VALPEEIFFIISITGVLENLIIILAV). At 50–58 (IKNKNLQFP) the chain is on the cytoplasmic side. A helical transmembrane segment spans residues 59-79 (MYFFICSLAISDMLGSLYKIL). At 80-104 (ESILIMFRNMGYFKPHGSFETTTDD) the chain is on the extracellular side. A helical membrane pass occupies residues 105–126 (IIDTMFILSLLGSIFSLLAIAV). Residues 127 to 147 (DRYITIFHALQYHSIVTMHRT) are Cytoplasmic-facing. Residues 148 to 168 (IAVLSIIWTFCIGSGITMVLF) traverse the membrane as a helical segment. Residues 169–180 (SHHVPTVLTFTS) are Extracellular-facing. Residues 181–199 (LFPLMLVFILCLYVHMFLM) form a helical membrane-spanning segment. At 200–217 (ARSHARNISTLPRGNMRG) the chain is on the cytoplasmic side. The chain crosses the membrane as a helical span at residues 218–244 (AITLTILLGVFIFCWAPFILHILLVTF). Over 245–256 (CPNNPYCTCYIS) the chain is Extracellular. The helical transmembrane segment at 257–278 (LFHVNGMLIMCNAVIDPFIYAF) threads the bilayer. At 279–297 (RSPELRSAFRRMISYSKCL) the chain is on the cytoplasmic side. C296 carries the S-palmitoyl cysteine lipid modification.

It belongs to the G-protein coupled receptor 1 family. Homodimer. Interacts with corticotropin (ACTH). Interacts with MRAP; this interaction targets MC2R to the plasma membrane. Interacts with MRAP2; competing with MRAP for binding to MC2R and impairing the binding of corticotropin (ACTH). Post-translationally, ubiquitinated by MGRN1 that may be involved in post-endocytic trafficking and/or degradation of internalized receptor.

The protein resides in the cell membrane. In terms of biological role, hormone receptor primarily expressed in adrenal cortex that plays a key role in regulating adrenocortical function. Upon corticotropin (ACTH) binding, facilitates the release of adrenal glucocorticoids, including cortisol and corticosterone. In addition, MC2R is required for fetal and neonatal adrenal gland development. Mechanistically, activates adenylate cyclase (cAMP), the MAPK cascade as well as the cAMP-dependent protein kinase A pathway leading to steroidogenic factor 1/NR5A1-mediated transcriptional activation. This Cavia porcellus (Guinea pig) protein is Adrenocorticotropic hormone receptor (MC2R).